Consider the following 344-residue polypeptide: Meiotic recombination protein DMC1 homolog A (344 aa).

An ATP-binding site is contributed by 133–140; it reads GEFRSGKT. Residue Arg235 coordinates dsDNA. 5 residues coordinate ssDNA: Arg235, Phe238, Arg241, Arg247, and Arg315. DsDNA-binding residues include Arg241 and Arg247.

Belongs to the RecA family. DMC1 subfamily. In terms of tissue distribution, expressed in meiotic young panicles.

The protein localises to the nucleus. Recombinase that may participate in meiotic recombination, specifically in homologous strand assimilation, which is required for the resolution of meiotic double-strand breaks. Exhibits DNA-dependent ATPase activity when bound to single-stranded DNA (ssDNA). Mediates renaturation of homologous complementary strands as well as assimilation of single strands into homologous supercoiled duplexes leading to D-loop formation. Binds circular single-stranded DNA (ssDNA) and circular double-stranded DNA (dsDNA) in vitro. Catalyzes DNA homologous renaturation and DNA strand exchange. The rates of these activities are dependent on the state of ATP hydrolysis. Forms helical filaments along ssDNA and dsDNA, and promotes strand exchange between ssDNA and dsDNA with long DNA substrates of several thousand base pairs. The presence of the replication protein A is not required for this activity. Seems to be required for homologous pairing and subsequent chromosome segregation during male meiosis. May be not directly required for homologous pairing during male meiosis. Required for synaptonemal complex assembly and crossover formation. Functions redundantly with DMC1B. This chain is Meiotic recombination protein DMC1 homolog A, found in Oryza sativa subsp. japonica (Rice).